The following is a 25-amino-acid chain: Caerin 1.1 (25 aa).

Leu-25 carries the leucine amide modification.

In terms of tissue distribution, expressed by the skin dorsal glands.

It is found in the secreted. In terms of biological role, antibacterial peptide with wide spectrum of activity. Active against the Gram-positive bacteria B.cereus (MIC=50 ug/ml), E.faecalis (MIC=25 ug/ml), L.lactis (MIC=1.5 ug/ml), L.innocua (MIC=25 ug/ml), S.aureus (MIC=3 ug/ml), S.epidermidis (MIC=12 ug/ml) and S.uberis (MIC=12 ug/ml), and against the Gram-negative bacteria E.coli (MIC=100 ug/ml) and P.multocida (MIC=25 ug/ml). The chain is Caerin 1.1 from Litoria peronii (Emerald spotted tree frog).